The chain runs to 145 residues: Synaptojanin-2-binding protein (145 aa).

Over 1–117 (MNGRVDYLVT…VHRGEGEPSG (117 aa)) the chain is Cytoplasmic. In terms of domain architecture, PDZ spans 13 to 100 (EINLTRGPSG…AVSLRVQHRL (88 aa)). The helical; Anchor for type IV membrane protein transmembrane segment at 118–138 (VPVAMVLLPVFALTMVAVWAF) threads the bilayer. Over 139–145 (VRYRKQL) the chain is Mitochondrial intermembrane.

In terms of assembly, binds (via the PDZ domain) to isoform 2A of SYNJ2 (via the unique motif in the C-terminus). Interacts (via C-terminus) with RALBP1. Interacts (via PDZ domain) with ACVR2A (via C-terminus) and ACVR2B (via C-terminus). Forms a ternary complex with ACVR2A and RALBP1. Interacts with MAPK12. Interacts with DLL1; enhances DLL1 protein stability, and promotes notch signaling in endothelial cells. In terms of tissue distribution, isoform 1 and isoform 2 are widely expressed, notably in brain, heart, lung, liver, kidney, skeletal muscle, ovary and testis. Isoform 3 is detected only in heart, spleen and testis.

It is found in the mitochondrion outer membrane. The protein localises to the cytoplasm. The protein resides in the perinuclear region. Functionally, isoform 1 regulates endocytosis of activin type 2 receptor kinases through the Ral/RALBP1-dependent pathway and may be involved in suppression of activin-induced signal transduction. Isoform 2 and isoform 3 show a stimulatory affect on activin-induced signal transduction and enhance activin type 2 expression at the cell surface. The sequence is that of Synaptojanin-2-binding protein from Mus musculus (Mouse).